We begin with the raw amino-acid sequence, 119 residues long: uncharacterized protein (119 aa).

Helical transmembrane passes span 61-80 (LISASSCSSLVSSPFFLLSV) and 87-103 (VVGVVVIDGFVVSVDII).

The protein resides in the membrane. This is an uncharacterized protein from Saccharomyces cerevisiae (strain ATCC 204508 / S288c) (Baker's yeast).